The following is a 418-amino-acid chain: Putative ion-transport protein YfeO (418 aa).

The next 12 membrane-spanning stretches (helical) occupy residues 10–30 (LLLS…LIVV), 54–74 (DSPL…GLVI), 99–119 (ALPG…SLGP), 120–140 (EHPI…RLLP), 149–169 (ILAS…AALI), 186–206 (LFAP…FFHP), 223–243 (ILSG…AVWC), 258–278 (VLVL…GGPV), 300–320 (DYFL…ASGF), 322–342 (GGRI…LHEH), 343–363 (VPAV…VLVV), and 371–391 (LFMA…CIVM).

It belongs to the chloride channel (TC 2.A.49) family.

The protein resides in the cell membrane. The polypeptide is Putative ion-transport protein YfeO (Escherichia coli (strain 55989 / EAEC)).